Reading from the N-terminus, the 372-residue chain is Sulfate/thiosulfate import ATP-binding protein CysA (372 aa).

Residues 3–237 (IQVQHVTKRF…PATPFVYGFL (235 aa)) form the ABC transporter domain. 35-42 (GPSGCGKT) is an ATP binding site.

It belongs to the ABC transporter superfamily. Sulfate/tungstate importer (TC 3.A.1.6) family. As to quaternary structure, the complex is composed of two ATP-binding proteins (CysA), two transmembrane proteins (CysT and CysW) and a solute-binding protein (CysP).

Its subcellular location is the cell inner membrane. The catalysed reaction is sulfate(out) + ATP + H2O = sulfate(in) + ADP + phosphate + H(+). It catalyses the reaction thiosulfate(out) + ATP + H2O = thiosulfate(in) + ADP + phosphate + H(+). Functionally, part of the ABC transporter complex CysAWTP involved in sulfate/thiosulfate import. Responsible for energy coupling to the transport system. The polypeptide is Sulfate/thiosulfate import ATP-binding protein CysA (Ralstonia nicotianae (strain ATCC BAA-1114 / GMI1000) (Ralstonia solanacearum)).